Consider the following 224-residue polypeptide: Protein FAM3D (224 aa).

The first 25 residues, 1–25, serve as a signal peptide directing secretion; the sequence is MRVSGVLRLLALIFAIVTTWMFIRS. 2 disulfides stabilise this stretch: Cys55–Cys83 and Cys61–Cys218. Positions 64–222 constitute a GG-type lectin domain; that stretch reads NYFAFKICSG…LEMEGCMPPK (159 aa). Asn107 carries N-linked (GlcNAc...) asparagine glycosylation.

The protein belongs to the FAM3 family. As to expression, abundantly expressed in placenta and weakly expressed in small intestine.

The protein localises to the secreted. The chain is Protein FAM3D (FAM3D) from Homo sapiens (Human).